Consider the following 231-residue polypeptide: Nitrate reductase [NAD(P)H] (231 aa).

Residues 1-85 (PQKLGLPVGR…KGPHRHIEYT (85 aa)) form the FAD-binding FR-type domain. Residues 25–28 (RAYT), 42–46 (LIKIY), Phe-47, 59–61 (LMS), and Thr-112 contribute to the FAD site.

Belongs to the nitrate reductase family. Homodimer. It depends on FAD as a cofactor. Requires heme as cofactor. Mo-molybdopterin serves as cofactor.

The catalysed reaction is nitrite + NAD(+) + H2O = nitrate + NADH + H(+). It carries out the reaction nitrite + NADP(+) + H2O = nitrate + NADPH + H(+). Functionally, nitrate reductase is a key enzyme involved in the first step of nitrate assimilation in plants, fungi and bacteria. In Zea mays (Maize), this protein is Nitrate reductase [NAD(P)H] (NAR).